We begin with the raw amino-acid sequence, 56 residues long: Large ribosomal subunit protein bL33 (56 aa).

The span at 1-12 (MASKGGRDKIKL) shows a compositional bias: basic and acidic residues. The tract at residues 1–28 (MASKGGRDKIKLESTAGTGHFYTTTKNK) is disordered. Residues 15-25 (TAGTGHFYTTT) are compositionally biased toward polar residues.

It belongs to the bacterial ribosomal protein bL33 family.

The polypeptide is Large ribosomal subunit protein bL33 (Cupriavidus necator (strain ATCC 17699 / DSM 428 / KCTC 22496 / NCIMB 10442 / H16 / Stanier 337) (Ralstonia eutropha)).